Here is a 273-residue protein sequence, read N- to C-terminus: Imidazole glycerol phosphate synthase subunit HisF (273 aa).

Catalysis depends on residues D11 and D134.

It belongs to the HisA/HisF family. Heterodimer of HisH and HisF.

The protein resides in the cytoplasm. It carries out the reaction 5-[(5-phospho-1-deoxy-D-ribulos-1-ylimino)methylamino]-1-(5-phospho-beta-D-ribosyl)imidazole-4-carboxamide + L-glutamine = D-erythro-1-(imidazol-4-yl)glycerol 3-phosphate + 5-amino-1-(5-phospho-beta-D-ribosyl)imidazole-4-carboxamide + L-glutamate + H(+). It functions in the pathway amino-acid biosynthesis; L-histidine biosynthesis; L-histidine from 5-phospho-alpha-D-ribose 1-diphosphate: step 5/9. Functionally, IGPS catalyzes the conversion of PRFAR and glutamine to IGP, AICAR and glutamate. The HisF subunit catalyzes the cyclization activity that produces IGP and AICAR from PRFAR using the ammonia provided by the HisH subunit. This Methanocella arvoryzae (strain DSM 22066 / NBRC 105507 / MRE50) protein is Imidazole glycerol phosphate synthase subunit HisF.